Consider the following 232-residue polypeptide: dITP/XTP pyrophosphatase (232 aa).

Residue 10–15 (TRNKGK) coordinates substrate. Aspartate 72 serves as the catalytic Proton acceptor. Residue aspartate 72 participates in Mg(2+) binding. Substrate contacts are provided by residues serine 73, 153-156 (FGYD), lysine 176, and 181-182 (HR).

This sequence belongs to the HAM1 NTPase family. As to quaternary structure, homodimer. Requires Mg(2+) as cofactor.

It catalyses the reaction XTP + H2O = XMP + diphosphate + H(+). The catalysed reaction is dITP + H2O = dIMP + diphosphate + H(+). It carries out the reaction ITP + H2O = IMP + diphosphate + H(+). Its function is as follows. Pyrophosphatase that catalyzes the hydrolysis of nucleoside triphosphates to their monophosphate derivatives, with a high preference for the non-canonical purine nucleotides XTP (xanthosine triphosphate), dITP (deoxyinosine triphosphate) and ITP. Seems to function as a house-cleaning enzyme that removes non-canonical purine nucleotides from the nucleotide pool, thus preventing their incorporation into DNA/RNA and avoiding chromosomal lesions. The sequence is that of dITP/XTP pyrophosphatase from Syntrophobacter fumaroxidans (strain DSM 10017 / MPOB).